Consider the following 311-residue polypeptide: tRNA N6-adenosine threonylcarbamoyltransferase (311 aa).

2 residues coordinate Fe cation: His108 and His112. Substrate contacts are provided by residues 130–134 (LVSGG), Asp163, Gly176, Asp180, and Asn270. Asp294 is a binding site for Fe cation.

The protein belongs to the KAE1 / TsaD family. It depends on Fe(2+) as a cofactor.

It is found in the cytoplasm. It catalyses the reaction L-threonylcarbamoyladenylate + adenosine(37) in tRNA = N(6)-L-threonylcarbamoyladenosine(37) in tRNA + AMP + H(+). Required for the formation of a threonylcarbamoyl group on adenosine at position 37 (t(6)A37) in tRNAs that read codons beginning with adenine. Is involved in the transfer of the threonylcarbamoyl moiety of threonylcarbamoyl-AMP (TC-AMP) to the N6 group of A37, together with TsaE and TsaB. TsaD likely plays a direct catalytic role in this reaction. This chain is tRNA N6-adenosine threonylcarbamoyltransferase, found in Metamycoplasma arthritidis (strain 158L3-1) (Mycoplasma arthritidis).